The primary structure comprises 570 residues: Biotin biosynthesis bifunctional protein BioHC (570 aa).

The tract at residues 1-29 is disordered; it reads MTEVNVRAAATPEEKPFLNRTRHEPANPQ. The carboxylesterase stretch occupies residues 1–279; it reads MTEVNVRAAA…HISHPREVAT (279 aa). Over residues 12–25 the composition is skewed to basic and acidic residues; that stretch reads PEEKPFLNRTRHEP. Substrate is bound by residues Trp41, 105-106, and 175-179; these read SL and FIALQ. Ser105 (nucleophile) is an active-site residue. Active-site residues include Asp239 and His267. His267 is a binding site for substrate. Residues 280–570 form a malonyl-ACP O-methyltransferase region; sequence MINSFLRQQA…RKPLDESASA (291 aa).

The protein in the N-terminal section; belongs to the AB hydrolase superfamily. Carboxylesterase BioH family. It in the C-terminal section; belongs to the methyltransferase superfamily.

It catalyses the reaction a carboxylic ester + H2O = an alcohol + a carboxylate + H(+). It carries out the reaction malonyl-[ACP] + S-adenosyl-L-methionine = malonyl-[ACP] methyl ester + S-adenosyl-L-homocysteine. Its pathway is cofactor biosynthesis; biotin biosynthesis. Converts the free carboxyl group of a malonyl-thioester to its methyl ester by transfer of a methyl group from S-adenosyl-L-methionine (SAM). It allows to synthesize pimeloyl-ACP via the fatty acid synthetic pathway. In terms of biological role, the physiological role of BioH is to remove the methyl group introduced by BioC when the pimeloyl moiety is complete. It allows to synthesize pimeloyl-ACP via the fatty acid synthetic pathway through the hydrolysis of the ester bonds of pimeloyl-ACP esters. The protein is Biotin biosynthesis bifunctional protein BioHC (bioC) of Teredinibacter turnerae (strain ATCC 39867 / T7901).